We begin with the raw amino-acid sequence, 350 residues long: UDP-rhamnose/UDP-galactose transporter 3 (350 aa).

Helical transmembrane passes span 12-32 (AVSDMGAWAMNVISSVGIIMA), 41-61 (GFAFSFATTLTGFHFALTALV), 81-101 (LIWFSIVANVSIAAMNFSLML), 104-124 (VGFYQISKLSMIPVVCVMEWI), 133-153 (EVKISVVVVVVGVGICTVTDV), 160-180 (FICACVAIFSSSLQQILIGSL), 200-220 (AFSLLVVGPLVDYLLSGKFIM), 224-244 (MSSGCFLFILLSCGLAVFCNI), 257-277 (SFQVIGHMKTVCILTLGWLLF), and 286-306 (VAGMIVAIVGMVIYSWAMELE).

The protein belongs to the TPT transporter family. TPT (TC 2.A.7.9) subfamily.

It localises to the golgi apparatus membrane. Nucleotide-sugar transporter that transports UDP-rhamnose or UDP-galactose and UMP in a strict counter-exchange mode. This chain is UDP-rhamnose/UDP-galactose transporter 3, found in Arabidopsis thaliana (Mouse-ear cress).